The sequence spans 765 residues: 5-methyltetrahydropteroyltriglutamate--homocysteine methyltransferase (765 aa).

Residues 16–19 and K121 each bind 5-methyltetrahydropteroyltri-L-glutamate; that span reads RELK. L-homocysteine-binding positions include 441 to 443 and E494; that span reads IGS. Residues 441-443 and E494 contribute to the L-methionine site; that span reads IGS. Residues 525 to 526 and W571 each bind 5-methyltetrahydropteroyltri-L-glutamate; that span reads RC. L-homocysteine is bound at residue D609. An L-methionine-binding site is contributed by D609. 5-methyltetrahydropteroyltri-L-glutamate is bound at residue E615. The Zn(2+) site is built by H651, C653, and E675. H704 acts as the Proton donor in catalysis. C736 is a binding site for Zn(2+).

The protein belongs to the vitamin-B12 independent methionine synthase family. Zn(2+) serves as cofactor.

The catalysed reaction is 5-methyltetrahydropteroyltri-L-glutamate + L-homocysteine = tetrahydropteroyltri-L-glutamate + L-methionine. Its pathway is amino-acid biosynthesis; L-methionine biosynthesis via de novo pathway; L-methionine from L-homocysteine (MetE route): step 1/1. Catalyzes the transfer of a methyl group from 5-methyltetrahydrofolate to homocysteine resulting in methionine formation. This Saccharophagus degradans (strain 2-40 / ATCC 43961 / DSM 17024) protein is 5-methyltetrahydropteroyltriglutamate--homocysteine methyltransferase.